Here is a 339-residue protein sequence, read N- to C-terminus: Heat-inducible transcription repressor HrcA (339 aa).

This sequence belongs to the HrcA family.

Functionally, negative regulator of class I heat shock genes (grpE-dnaK-dnaJ and groELS operons). Prevents heat-shock induction of these operons. This is Heat-inducible transcription repressor HrcA from Thiobacillus denitrificans (strain ATCC 25259 / T1).